The primary structure comprises 735 residues: Funoran endo-beta-hydrolase (735 aa).

Positions 1–27 are cleaved as a signal peptide; sequence MRVKSVYKKLSVSFILVMLSASQEVNS. Glu-200 (proton donor) is an active-site residue. Catalysis depends on Glu-322, which acts as the Nucleophile.

This sequence belongs to the glycosyl hydrolase 86 family.

It carries out the reaction Endohydrolysis of beta-(1-&gt;4)-linkages between beta-D-galactopyranose-6-sulfate and 3,6-anhydro-alpha-L-galactopyranose units in funoran.. It catalyses the reaction Hydrolysis of (1-&gt;4)-beta-D-galactosidic linkages in agarose, giving the tetramer as the predominant product.. Agarase activity is enhanced in the presence of NaCl. Agarase activity is significantly inhibited by Zn(2+) and slightly activated by several divalent ions including Mg(2+), Cd(2+) and Ca(2+). Functionally, endohydrolase that cleaves the beta-1,4 glycosidic bond between beta-D-galactopyranose-6-sulfate (G6S) and 3,6-anhydro-alpha-L-galactopyranose (LA) unit of funoran, a polysaccharide produced by red algae of the genus Gloiopeltis. It releases the disaccharide LA-G6S as the predominant end product. Also acts as a random endo-acting beta-agarase, which can hydrolyze agarose tetrasaccharides and hexasaccharides, and produces disaccharides as smallest products. Besides typical agarose oligosaccharides, it can use methylated galactoses. The enzyme exhibits higher catalytic efficiency towards agarose, but binds funoran preferentially. Has no activity on porphyran. This chain is Funoran endo-beta-hydrolase, found in Wenyingzhuangia aestuarii.